We begin with the raw amino-acid sequence, 507 residues long: Germ cell nuclear acidic protein (507 aa).

The segment covering 1-51 (MDSGSSSSSSSSGSSSGSCSTSGSGSTSGSSTTSSSSSSSSSSSSSSSSSS) has biased composition (low complexity). Positions 1 to 507 (MDSGSSSSSS…GRGRGAKAGK (507 aa)) are disordered. 4 consecutive short sequence motifs (SUMO interaction motif 1 (SIM)) follow at residues 12–15 (SGSS), 66–69 (CVVI), 86–89 (VCEI), and 108–111 (LIVI). 3 stretches are compositionally biased toward basic and acidic residues: residues 122–141 (KNTK…KEGV), 179–354 (SEAK…KGEM), and 431–449 (PQDR…RGDS). Residues 480–507 (GRGRGRGRGRGRGRGRGRGRGRGAKAGK) show a composition bias toward basic residues.

This sequence belongs to the serine-aspartate repeat-containing protein (SDr) family. In terms of assembly, interacts (via SIM domains) with SUMO2; this interaction allows the GCNA recruitment to DPCs sites. Interacts with TOP2A; this interaction allows the resolution of topoisomerase II (TOP2A) DNA-protein cross-links. Germ-cells specific.

Its subcellular location is the chromosome. The protein resides in the nucleus. The protein localises to the PML body. In terms of biological role, may play a role in DNA-protein cross-links (DPCs) clearance through a SUMO-dependent recruitment to sites of DPCs, ensuring the genomic stability by protecting germ cells and early embryos from various sources of damage. Can resolve the topoisomerase II (TOP2A) DPCs. The sequence is that of Germ cell nuclear acidic protein from Mus musculus (Mouse).